Here is a 618-residue protein sequence, read N- to C-terminus: UvrABC system protein C (618 aa).

In terms of domain architecture, GIY-YIG spans D13–I92. A UVR domain is found at L204–I239.

This sequence belongs to the UvrC family. In terms of assembly, interacts with UvrB in an incision complex.

It is found in the cytoplasm. In terms of biological role, the UvrABC repair system catalyzes the recognition and processing of DNA lesions. UvrC both incises the 5' and 3' sides of the lesion. The N-terminal half is responsible for the 3' incision and the C-terminal half is responsible for the 5' incision. The sequence is that of UvrABC system protein C from Clostridium botulinum (strain Langeland / NCTC 10281 / Type F).